A 379-amino-acid chain; its full sequence is Sialidase-2 (379 aa).

The short motif at 20–23 (YRIP) is the FRIP motif element. 2 residues coordinate substrate: Arg21 and Arg41. Asp46 acts as the Proton acceptor in catalysis. Residues 127-138 (VTSTDYGMNWSP) form a BNR 1 repeat. Substrate-binding residues include Tyr179 and Tyr181. The stretch at 197-208 (FISLDHGHTWEL) is one BNR 2 repeat. Residues Glu218, Arg237, and Arg303 each contribute to the substrate site. The active-site Nucleophile is the Tyr333. The active site involves Glu354.

It belongs to the glycosyl hydrolase 33 family. Detected in skeletal muscle.

It is found in the cytoplasm. It localises to the cytosol. The enzyme catalyses Hydrolysis of alpha-(2-&gt;3)-, alpha-(2-&gt;6)-, alpha-(2-&gt;8)- glycosidic linkages of terminal sialic acid residues in oligosaccharides, glycoproteins, glycolipids, colominic acid and synthetic substrates.. The catalysed reaction is a ganglioside GD1a + H2O = a ganglioside GM1 + N-acetylneuraminate. It catalyses the reaction a ganglioside GM1 + H2O = a ganglioside GA1 + N-acetylneuraminate. It carries out the reaction a ganglioside GT1b + H2O = a ganglioside GD1b + N-acetylneuraminate. The enzyme catalyses a ganglioside GD1b + H2O = a ganglioside GM1 + N-acetylneuraminate. The catalysed reaction is a ganglioside GD3 + H2O = a ganglioside GM3 + N-acetylneuraminate. It catalyses the reaction a ganglioside GM3 + H2O = a beta-D-galactosyl-(1-&gt;4)-beta-D-glucosyl-(1&lt;-&gt;1)-ceramide + N-acetylneuraminate. It carries out the reaction a ganglioside GM2 + H2O = a ganglioside GA2 + N-acetylneuraminate. The enzyme catalyses a neolactoside IV(3)-alpha-NeuAc-nLc4Cer(d18:1(4E)) + H2O = a neolactoside nLc4Cer(d18:1(4E)) + N-acetylneuraminate. The catalysed reaction is N-acetyl-alpha-neuraminosyl-(2-&gt;3)-beta-D-galactosyl-(1-&gt;4)-D-glucose + H2O = lactose + N-acetylneuraminate. In terms of biological role, exo-alpha-sialidase that catalyzes the hydrolytic cleavage of the terminal sialic acid (N-acetylneuraminic acid, Neu5Ac) of a glycan moiety in the catabolism of glycolipids, glycoproteins and oligosacharides. Recognizes sialyl linkage positions of the glycan moiety as well as the supramolecular organization of the sialoglycoconjugate. Displays preference for alpha-(2-&gt;3)-sialylated GD1a and GT1B gangliosides over alpha-(2-&gt;8)-sialylated GD1b, in both monomeric forms and micelles. Hydrolyzes monomeric GM1 ganglioside, but has no activity toward the miscellar form. Has lower sialidase activity for glycoproteins such as fetuin and TF/transferrin that carry a mixture of alpha-(2-&gt;3) and alpha-(2-&gt;6)-sialyl linkages. Cleaves milk oligosaccharide alpha-(2-&gt;3)-sialyllactose, but is inactive toward alpha-(2-&gt;6)-sialyllactose isomer. Has no activity toward colominic acid, a homomer of alpha-(2-&gt;8)-linked Neu5Ac residues. This is Sialidase-2 (Neu2) from Rattus norvegicus (Rat).